The sequence spans 522 residues: Gypsy retrotransposon integrase-like protein 1 (522 aa).

The Integrase catalytic domain occupies 135-292 (KVENPWSLVT…TPYFQMFSRN (158 aa)). At Ser-502 the chain carries Phosphoserine.

This is Gypsy retrotransposon integrase-like protein 1 (GIN1) from Pongo abelii (Sumatran orangutan).